We begin with the raw amino-acid sequence, 129 residues long: M-zodatoxin-Lt8a (129 aa).

The N-terminal stretch at 1–20 (MKYFVVALALVAAFACIAES) is a signal peptide. Residues 21–60 (KPAESEHELAEVEEENELADLEDAVWLEHLADLSDLEEAR) constitute a propeptide that is removed on maturation. The short motif at 57-60 (EEAR) is the Processing quadruplet motif element.

The protein belongs to the cationic peptide 06 (cytoinsectotoxin) family. Cleavage of the propeptide depends on the processing quadruplet motif (XXXR, with at least one of X being E). Expressed by the venom gland.

It localises to the secreted. Insecticidal, cytolytic and antimicrobial peptide. Has insecticidal activity against the flesh fly S.carnaria, and against the cockroach N.cinerea. Has insecticidal activity against D.melanogaster. Has hemolytic activity against human erythrocytes (EC(50)=6 uM). Has cytolytic activity against insect Sf9 cells (EC(50)=1 uM) and human leukocytes (EC(50)=3 uM). Has antibacterial activity against the Gram-positive bacteria A.globiformis VKM Ac-1112 (MIC=0.5 uM), and B.subtilis VKM B-501 (MIC=0.6-0.9 uM), and against the Gram-negative bacteria E.coli C600 (MIC=0.5 uM), E.coli DH5alpha (MIC=0.9 uM), E.coli MH1 (MIC=0.5 uM), P.aeruginosa PAO1 (MIC=1.9 uM), and P.fluorescens VKM B-894 (MIC=3.8 uM). Lacks antimicrobial activity against the Gram-positive bacteria M.luteus and S.aureus, and against the Gram-negative bacterium S.marcescens. Forms voltage-dependent, ion-permeable channels in membranes. At high concentration causes cell membrane lysis. This Lachesana tarabaevi (Spider) protein is M-zodatoxin-Lt8a (cit 1-1).